We begin with the raw amino-acid sequence, 673 residues long: MAKIAQGAMYRGSVHDFADFDANQDAEALYTAMKGFGSDKESILELITSRSNKQRQEICQSYKSLYGKDLIADLKYELTGKFERLIVNLMRPLAYCDAKEIKDAISGIGTDEKCLIEILASRTNEQIHQLVAAYKDAYERDLESDIIGDTSGHFQKMLVVLLQGTRENDDVVSEDLVQQDVQDLYEAGELKWGTDEAQFIYILGNRSKQHLRLVFDEYLKTTGKPIEASIRGELSGDFEKLMLAVVKCIRSTPEYFAERLFKAMKGLGTRDNTLIRIMVSRSELDMLDIREIFRTKYEKSLYSMIKNDTSGEYKKALLKLCGGDDDAAGQFFPEAAQVAYQMWELSAVSRVELKGTVRAANDFNPDADAKGLRKAMKGIGTDEATIIDIITQRSNVQRQQIRQTFKSHFGRDLMADLKSEISGDLARLILGLMMPPAHYDAKQLKKAMEGAGTDEKALIEILATRTNAEIRAINEAYKEDYHKSLEDALSSDTSGHFKRILISLATGNREEGGENRDQAQEDAQVAAEILEIADTPSGDKTSLETRFMTVLCTRSYPHLRRVFQEFIKKTNYDIEHVIKKEMSGDVKDAFVAIVQSVKNKPLFFADKLYKSMKGAGTDEKTLTRVMVSRSEIDLLNIRREFIEKYDKSPHQAIEGDTSGDFMKALLALCGGED.

Ala-2 carries the N-acetylalanine modification. Ser-13 carries the post-translational modification Phosphoserine. Annexin repeat units lie at residues 20 to 91 (FDAN…NLMR), 92 to 163 (PLAY…VLLQ), 175 to 247 (DLVQ…AVVK), 251 to 322 (STPE…KLCG), 363 to 434 (FNPD…GLMM), 435 to 506 (PPAH…SLAT), 521 to 595 (EDAQ…AIVQ), and 599 to 670 (NKPL…ALCG). Tyr-30 bears the Phosphotyrosine mark. Lys-63, Lys-68, Lys-75, and Lys-81 each carry N6-acetyllysine. The residue at position 201 (Tyr-201) is a Phosphotyrosine. Residues Lys-306, Lys-370, and Lys-418 each carry the N6-acetyllysine modification. Residue Ser-422 is modified to Phosphoserine. Lys-483 carries the N6-acetyllysine modification. Phosphoserine is present on Ser-537. At Lys-620 the chain carries N6-acetyllysine.

Belongs to the annexin family.

The protein resides in the cytoplasm. Its subcellular location is the melanosome. Functionally, may associate with CD21. May regulate the release of Ca(2+) from intracellular stores. The sequence is that of Annexin A6 (Anxa6) from Rattus norvegicus (Rat).